Here is a 301-residue protein sequence, read N- to C-terminus: Protoheme IX farnesyltransferase (301 aa).

The next 8 helical transmembrane spans lie at 25 to 45 (VTQLAVFCAVIGMFLSTPGMV), 47 to 67 (WTPLIGGTVGIWLLAGAAFAI), 97 to 117 (ILLFSAVLGGLGMWTLYTFAN), 119 to 139 (LTMWLTLATFVGYAVIYTLLL), 147 to 167 (IVIGGASGAMPPALGWAAVTG), 173 to 193 (AWILVLIIFVWTPPHFWALAL), 235 to 255 (FISGMSGVVYLAAAVLLGALF), and 279 to 299 (IVYLSLLFAALLIDHYARVLI).

It belongs to the UbiA prenyltransferase family. Protoheme IX farnesyltransferase subfamily.

It is found in the cell inner membrane. The catalysed reaction is heme b + (2E,6E)-farnesyl diphosphate + H2O = Fe(II)-heme o + diphosphate. It participates in porphyrin-containing compound metabolism; heme O biosynthesis; heme O from protoheme: step 1/1. In terms of biological role, converts heme B (protoheme IX) to heme O by substitution of the vinyl group on carbon 2 of heme B porphyrin ring with a hydroxyethyl farnesyl side group. The sequence is that of Protoheme IX farnesyltransferase from Paraburkholderia xenovorans (strain LB400).